A 953-amino-acid polypeptide reads, in one-letter code: Pyruvate, phosphate dikinase, chloroplastic (953 aa).

A chloroplast-targeting transit peptide spans 1 to 77 (MMSSLSVEGM…VLNPVSPPVT (77 aa)). The interval 55–74 (PELRSSGLTPPRAVLNPVSP) is disordered. Thr-533 is modified (phosphothreonine; by PDRP1). The active-site Tele-phosphohistidine intermediate is His-535. Substrate-binding residues include Arg-641, Arg-698, Glu-827, Gly-848, Thr-849, Asn-850, and Asp-851. Glu-827 provides a ligand contact to Mg(2+). Mg(2+) is bound at residue Asp-851. Catalysis depends on Cys-913, which acts as the Proton donor.

The protein belongs to the PEP-utilizing enzyme family. Homotetramer. The cofactor is Mg(2+). Post-translationally, phosphorylation of Thr-533 in the dark inactivates the enzyme. Dephosphorylation upon light stimulation reactivates the enzyme. In terms of tissue distribution, isoform 1 mainly localized in mesophyll cells and only a low level is found in bundle sheath cells. Isoform 2 is expressed in roots and stems.

It localises to the plastid. It is found in the chloroplast. The protein resides in the cytoplasm. The enzyme catalyses pyruvate + phosphate + ATP = phosphoenolpyruvate + AMP + diphosphate + H(+). It functions in the pathway photosynthesis; C4 acid pathway. With respect to regulation, activated by light-induced dephosphorylation. Inhibited by dark-induced phosphorylation. Both reactions are catalyzed by PDRP1. Functionally, formation of phosphoenolpyruvate, which is the primary acceptor of CO(2) in C4 and some Crassulacean acid metabolism plants. The polypeptide is Pyruvate, phosphate dikinase, chloroplastic (PPDK) (Flaveria trinervia (Clustered yellowtops)).